The primary structure comprises 378 residues: Myoglobin (378 aa).

Histidine 332 lines the heme pocket.

The protein belongs to the indoleamine 2,3-dioxygenase family. As to quaternary structure, homodimer. Heme is required as a cofactor.

Serves a reserve supply of oxygen and facilitates the movement of oxygen within muscles. The chain is Myoglobin from Haliotis madaka (Giant abalone).